Reading from the N-terminus, the 311-residue chain is 2-methoxy-6-polyprenyl-1,4-benzoquinol methylase, mitochondrial (311 aa).

The transit peptide at 1-29 directs the protein to the mitochondrion; the sequence is MAAGLCPGRALLSRRGGALWALLGTARGR. S-adenosyl-L-methionine contacts are provided by residues Thr-100, Asp-155, and 183-184; that span reads NA.

The protein belongs to the class I-like SAM-binding methyltransferase superfamily. MenG/UbiE family. As to quaternary structure, component of a multi-subunit COQ enzyme complex, composed of at least COQ3, COQ4, COQ5, COQ6, COQ7 and COQ9.

It is found in the mitochondrion inner membrane. It carries out the reaction a 2-methoxy-6-(all-trans-polyprenyl)benzene-1,4-diol + S-adenosyl-L-methionine = a 5-methoxy-2-methyl-3-(all-trans-polyprenyl)benzene-1,4-diol + S-adenosyl-L-homocysteine + H(+). It functions in the pathway cofactor biosynthesis; ubiquinone biosynthesis. Functionally, methyltransferase required for the conversion of 2-polyprenyl-6-methoxy-1,4-benzoquinol (DDMQH2) to 2-polyprenyl-3-methyl-6-methoxy-1,4-benzoquinol (DMQH2). The sequence is that of 2-methoxy-6-polyprenyl-1,4-benzoquinol methylase, mitochondrial from Gallus gallus (Chicken).